The sequence spans 159 residues: U-actitoxin-Avd13a/b (159 aa).

The signal sequence occupies residues 1-18 (MKSIFLVFFAVCLVKAEA). Residues 19–26 (GKGRKREP) constitute a propeptide that is removed on maturation. Disulfide bonds link cysteine 33–cysteine 45 and cysteine 36–cysteine 52. Residues 59-60 (EP) constitute a propeptide that is removed on maturation. Intrachain disulfides connect cysteine 67–cysteine 79 and cysteine 70–cysteine 86. The propeptide occupies 93–94 (EP). Intrachain disulfides connect cysteine 101–cysteine 113 and cysteine 104–cysteine 120. Residues 127-128 (EP) constitute a propeptide that is removed on maturation. 2 disulfide bridges follow: cysteine 135–cysteine 147 and cysteine 138–cysteine 154.

Belongs to the sea anemone BBH family.

It is found in the secreted. Its subcellular location is the nematocyst. Its function is as follows. Inhibits ion channels. The protein is U-actitoxin-Avd13a/b of Anemonia viridis (Snakelocks anemone).